A 388-amino-acid polypeptide reads, in one-letter code: Basigin (388 aa).

The first 22 residues, 1–22 (MAAALLLALAFTFLSGQGACAA), serve as a signal peptide directing secretion. Topologically, residues 23 to 326 (AGFLKAPMSQ…ISLRVRSRLA (304 aa)) are extracellular. The 84-residue stretch at 37-120 (GGSVVLHCEA…SSDPDRNHLT (84 aa)) folds into the Ig-like domain. 3 disulfides stabilise this stretch: Cys44–Cys108, Cys157–Cys203, and Cys242–Cys304. One can recognise an Ig-like C2-type domain in the interval 138 to 219 (EPGTIVTSVQ…VGRGNINVEG (82 aa)). N-linked (GlcNAc...) asparagine glycosylation is found at Asn160, Asn269, and Asn305. Residues 221–320 (PRIKVGKKSE…GSARETISLR (100 aa)) enclose the Ig-like V-type domain. The chain crosses the membrane as a helical span at residues 327–347 (ALWPFLGIVAEVLVLVTIIFI). The Cytoplasmic portion of the chain corresponds to 348–388 (YEKRRKPDQTLDEDDPGAAPLKGSGSHLNDKDKNVRQRNAT). Residues 355 to 388 (DQTLDEDDPGAAPLKGSGSHLNDKDKNVRQRNAT) form a disordered region. Phosphothreonine is present on Thr357. Ser371 bears the Phosphoserine mark.

Homooligomer. Interacts with NXNL1, SLC2A1 and SLC16A1/GLUT1. Interacts with XKR8; promoting its localization at the cell membrane. As to quaternary structure, homooligomer. Interacts with SLC16A1; interaction mediates SLC16A1 targeting to the plasma membrane. Interacts with SLC16A3; interaction mediates SLC16A3 targeting to the plasma membrane. Interacts with VEGFA, KDR/VEGFR2, PPIA/CYPA, SLC16A12, SLC16A11, ATP1B2, MAG, L1CAM and AJAP1. Interacts with PPIL2; regulates BSG transport to the cell membrane. In terms of assembly, interacts with SLC16A6; this interaction mediates targeting to the plasma membrane. In terms of tissue distribution, expressed in the skeletal muscle, liver, small intestine, kidney, testis, brain, heart and spleen. Also present in various immature cells and endothelia.

The protein resides in the cell membrane. The protein localises to the photoreceptor inner segment. Its subcellular location is the cell projection. It is found in the cilium. It localises to the photoreceptor outer segment. The protein resides in the endoplasmic reticulum membrane. The protein localises to the basolateral cell membrane. In terms of biological role, essential for normal retinal maturation and development. Acts as a retinal cell surface receptor for NXNL1 and plays an important role in NXNL1-mediated survival of retinal cone photoreceptors. In association with glucose transporter SLC16A1/GLUT1 and NXNL1, promotes retinal cone survival by enhancing aerobic glycolysis and accelerating the entry of glucose into photoreceptors. Signaling receptor for cyclophilins, essential for PPIA/CYPA and PPIB/CYPB-dependent signaling related to chemotaxis and adhesion of immune cells. Plays an important role in targeting the monocarboxylate transporters SLC16A1/GLUT1 and SLC16A3 to the plasma membrane. Acts as a coreceptor for vascular endothelial growth factor receptor 2 (KDR/VEGFR2) in endothelial cells enhancing its VEGFA-mediated activation and downstream signaling. Promotes angiogenesis through EPAS1/HIF2A-mediated up-regulation of VEGFA and KDR/VEGFR2 in endothelial cells. Plays an important role in spermatogenesis; mediates interactions between germ cells and Sertoli cell and is essential for the development/differentiation of germ cells to round spermatids. This is Basigin (Bsg) from Rattus norvegicus (Rat).